Reading from the N-terminus, the 553-residue chain is Effector protein HopAB2 (553 aa).

Disordered regions lie at residues 1 to 123, 198 to 227, and 239 to 275; these read MAGI…APRR, AVHQQAASAPVRSPTPTPASPAASSSGSSQ, and APNQGRSSNTAASQTPVDRSPPRVNQRPIRVDRAAMR. Residues 1 to 308 are host recognition; Pto interaction; it reads MAGINRAGPS…LRTALERHVM (308 aa). Residues 24–39 show a composition bias toward low complexity; the sequence is SGQAHGSGSGASSSNS. Residues 47 to 60 are compositionally biased toward pro residues; it reads SNTPPSNAPAPPPT. The segment covering 217-227 has biased composition (low complexity); it reads SPAASSSGSSQ. Over residues 242 to 255 the composition is skewed to polar residues; that stretch reads QGRSSNTAASQTPV. The segment at 309 to 553 is E3 ubiquitin-protein ligase; that stretch reads QRLPIPLDIG…IAKYAFRIVP (245 aa). An Interaction with Pto-kinase motif is present at residues 325–328; the sequence is GINP. The tract at residues 361–380 is disordered; the sequence is APRPAVPVAPATASRRPDGT. A required for E3 ubiquitin-protein ligase and anti-PCD activities and pathogenesis region spans residues 512 to 529; that stretch reads KDLAFMDMKKLAQFLAGK.

The protein belongs to the HopAB family. As to quaternary structure, interacts physically with plant cell Pto. In terms of processing, auto-ubiquitinated.

It localises to the secreted. Functionally, effector protein involved in gene-for-gene resistance in tomato plants. It is recognized by the host Pto resistance protein and elicits Pto and Prf-dependent hypersensitive response (HR) and programmed cell death (PCD), resulting in host immunity. In susceptible plants, acts as a virulence factor by suppressing PCD and HR-based plant immunity. This function requires its E3 ubiquitin ligase activity probably by recruiting E2 enzymes and transferring ubiquitin molecules to cellular proteins involved in regulation of PCD and targeting them for degradation. Also, induces expression of host genes involved in ethylene biosynthesis and signaling, in particular ACO1 and ACO2, encoding the ethylene-forming enzyme ACC oxidase. The polypeptide is Effector protein HopAB2 (hopAB2) (Pseudomonas syringae pv. tomato (strain ATCC BAA-871 / DC3000)).